The following is a 600-amino-acid chain: Aspartate--tRNA(Asp/Asn) ligase (600 aa).

E174 is an L-aspartate binding site. Residues 198 to 201 form an aspartate region; that stretch reads QLFK. L-aspartate is bound at residue R220. ATP-binding positions include 220 to 222 and Q229; that span reads RDE. H457 is a binding site for L-aspartate. Residue E491 participates in ATP binding. L-aspartate is bound at residue R498. 543–546 serves as a coordination point for ATP; the sequence is GLDR.

This sequence belongs to the class-II aminoacyl-tRNA synthetase family. Type 1 subfamily. In terms of assembly, homodimer.

Its subcellular location is the cytoplasm. It catalyses the reaction tRNA(Asx) + L-aspartate + ATP = L-aspartyl-tRNA(Asx) + AMP + diphosphate. In terms of biological role, aspartyl-tRNA synthetase with relaxed tRNA specificity since it is able to aspartylate not only its cognate tRNA(Asp) but also tRNA(Asn). Reaction proceeds in two steps: L-aspartate is first activated by ATP to form Asp-AMP and then transferred to the acceptor end of tRNA(Asp/Asn). This chain is Aspartate--tRNA(Asp/Asn) ligase, found in Burkholderia lata (strain ATCC 17760 / DSM 23089 / LMG 22485 / NCIMB 9086 / R18194 / 383).